Reading from the N-terminus, the 334-residue chain is Leukocyte cell-derived chemotaxin 1 (334 aa).

A helical membrane pass occupies residues valine 45 to tryptophan 65. Positions glycine 104 to leucine 201 constitute a BRICHOS domain. Cysteine 131 and cysteine 193 form a disulfide bridge. Residues arginine 211–arginine 214 constitute a propeptide that is removed on maturation. The disordered stretch occupies residues arginine 218–glutamate 268. Residues asparagine 242–asparagine 257 show a composition bias toward polar residues. Asparagine 243 carries an N-linked (GlcNAc...) asparagine glycan. 4 disulfides stabilise this stretch: cysteine 282–cysteine 286, cysteine 283–cysteine 323, cysteine 293–cysteine 317, and cysteine 297–cysteine 313.

This sequence belongs to the chondromodulin-1 family. In terms of processing, after cleavage, the post-translationally modified ChM-I is secreted as a glycoprotein. In terms of tissue distribution, detected in cartilage and cardiac valves (at protein level). Detected in the laminae fibrosa, spongiosa and ventricularis layers of normal cardiac valves (at protein level). Expression is decreased cardiac valves of patients with valvular heart disease (at protein level). Weakly expressed in chondrosarcoma.

The protein localises to the secreted. Its subcellular location is the extracellular space. The protein resides in the extracellular matrix. It localises to the endomembrane system. Its function is as follows. Bifunctional growth regulator that stimulates the growth of cultured chondrocytes in the presence of basic fibroblast growth factor (FGF) but inhibits the growth of cultured vascular endothelial cells. May contribute to the rapid growth of cartilage and vascular invasion prior to the replacement of cartilage by bone during endochondral bone development. Inhibits in vitro tube formation and mobilization of endothelial cells. Plays a role as antiangiogenic factor in cardiac valves to suppress neovascularization. This chain is Leukocyte cell-derived chemotaxin 1, found in Homo sapiens (Human).